Reading from the N-terminus, the 1269-residue chain is DNA-directed RNA polymerase subunit beta (1269 aa).

This sequence belongs to the RNA polymerase beta chain family. The RNAP catalytic core consists of 2 alpha, 1 beta, 1 beta' and 1 omega subunit. When a sigma factor is associated with the core the holoenzyme is formed, which can initiate transcription.

It carries out the reaction RNA(n) + a ribonucleoside 5'-triphosphate = RNA(n+1) + diphosphate. DNA-dependent RNA polymerase catalyzes the transcription of DNA into RNA using the four ribonucleoside triphosphates as substrates. The sequence is that of DNA-directed RNA polymerase subunit beta from Porphyromonas gingivalis (strain ATCC 33277 / DSM 20709 / CIP 103683 / JCM 12257 / NCTC 11834 / 2561).